A 320-amino-acid chain; its full sequence is tRNA uridine(34) hydroxylase (320 aa).

The 95-residue stretch at 123–217 folds into the Rhodanese domain; the sequence is EDENTVILDA…YGKDPETKGL (95 aa). Cys177 (cysteine persulfide intermediate) is an active-site residue.

The protein belongs to the TrhO family.

The catalysed reaction is uridine(34) in tRNA + AH2 + O2 = 5-hydroxyuridine(34) in tRNA + A + H2O. Its function is as follows. Catalyzes oxygen-dependent 5-hydroxyuridine (ho5U) modification at position 34 in tRNAs. The polypeptide is tRNA uridine(34) hydroxylase (Staphylococcus epidermidis (strain ATCC 35984 / DSM 28319 / BCRC 17069 / CCUG 31568 / BM 3577 / RP62A)).